We begin with the raw amino-acid sequence, 254 residues long: Sensory transduction protein LytR (254 aa).

The region spanning 2–116 (RAIIVDDEPL…RIAQAVHKVE (115 aa)) is the Response regulatory domain. Asp53 carries the 4-aspartylphosphate modification. Residues 120 to 143 (GQTTEHHSDSYTTASMDTQNNEKT) are disordered. The segment covering 129-138 (SYTTASMDTQ) has biased composition (polar residues). The HTH LytTR-type domain maps to 149–253 (LPIEVNERIH…MKTFKQMMGL (105 aa)).

Post-translationally, phosphorylated by LytS.

The protein resides in the cytoplasm. In terms of biological role, member of the two-component regulatory system LytR/LytS that probably regulates genes involved in cell wall metabolism. The protein is Sensory transduction protein LytR (lytR) of Staphylococcus saprophyticus subsp. saprophyticus (strain ATCC 15305 / DSM 20229 / NCIMB 8711 / NCTC 7292 / S-41).